Consider the following 139-residue polypeptide: D-ribose pyranase (139 aa).

The Proton donor role is filled by His20. Substrate-binding positions include Asp28, His106, and 128-130 (YAN).

It belongs to the RbsD / FucU family. RbsD subfamily. In terms of assembly, homodecamer.

It is found in the cytoplasm. It carries out the reaction beta-D-ribopyranose = beta-D-ribofuranose. It functions in the pathway carbohydrate metabolism; D-ribose degradation; D-ribose 5-phosphate from beta-D-ribopyranose: step 1/2. Its function is as follows. Catalyzes the interconversion of beta-pyran and beta-furan forms of D-ribose. The protein is D-ribose pyranase of Histophilus somni (strain 129Pt) (Haemophilus somnus).